Consider the following 584-residue polypeptide: Potassium-transporting ATPase potassium-binding subunit (584 aa).

10 consecutive transmembrane segments (helical) span residues Phe8–Phe28, Ser65–Gln85, Val139–Phe159, Val172–Leu192, Phe262–Phe282, Gly292–Trp312, Gly398–Gly418, Ile440–Gly460, Met507–Ala527, and Leu544–Ala564.

This sequence belongs to the KdpA family. The system is composed of three essential subunits: KdpA, KdpB and KdpC.

The protein localises to the cell membrane. Functionally, part of the high-affinity ATP-driven potassium transport (or Kdp) system, which catalyzes the hydrolysis of ATP coupled with the electrogenic transport of potassium into the cytoplasm. This subunit binds the extracellular potassium ions and delivers the ions to the membrane domain of KdpB through an intramembrane tunnel. The chain is Potassium-transporting ATPase potassium-binding subunit from Methanoregula boonei (strain DSM 21154 / JCM 14090 / 6A8).